The chain runs to 80 residues: Exodeoxyribonuclease 7 small subunit (80 aa).

Belongs to the XseB family. As to quaternary structure, heterooligomer composed of large and small subunits.

Its subcellular location is the cytoplasm. It carries out the reaction Exonucleolytic cleavage in either 5'- to 3'- or 3'- to 5'-direction to yield nucleoside 5'-phosphates.. In terms of biological role, bidirectionally degrades single-stranded DNA into large acid-insoluble oligonucleotides, which are then degraded further into small acid-soluble oligonucleotides. This is Exodeoxyribonuclease 7 small subunit from Rickettsia africae (strain ESF-5).